A 463-amino-acid polypeptide reads, in one-letter code: V-type proton ATPase subunit S1 (463 aa).

A signal peptide spans 1 to 32 (MMAATVVSRIRTGTRWAPVLWLLLSLVAVAAA). Positions 33–225 (VAAEQQVPLV…TAVRPSRVAR (193 aa)) are excised as a propeptide. The Lumenal portion of the chain corresponds to 33-412 (VAAEQQVPLV…EQFSYASDCA (380 aa)). Asn164, Asn255, Asn267, Asn290, Asn297, Asn344, Asn351, and Asn399 each carry an N-linked (GlcNAc...) asparagine glycan. A helical membrane pass occupies residues 413-433 (GFFSPGIWMGLLTTLFMLFIF). Residues 434–463 (TYGLHMILSLKTMDRFDDRKGPTITLTQIV) are Cytoplasmic-facing.

This sequence belongs to the vacuolar ATPase subunit S1 family. Accessory component of the multisubunit proton-transporting vacuolar (V)-ATPase protein pump. Interacts (via N-terminus) with ATP6AP2 (via N-terminus). Interacts with RNASEK. Interacts with TMEM106B (via C-terminus). Post-translationally, N-glycosylated. As to expression, expressed in brain (at protein level).

It localises to the endoplasmic reticulum membrane. Its subcellular location is the endoplasmic reticulum-Golgi intermediate compartment membrane. It is found in the cytoplasmic vesicle. The protein resides in the secretory vesicle. The protein localises to the synaptic vesicle membrane. It localises to the clathrin-coated vesicle membrane. In terms of biological role, accessory subunit of the proton-transporting vacuolar (V)-ATPase protein pump, which is required for luminal acidification of secretory vesicles. Guides the V-type ATPase into specialized subcellular compartments, such as neuroendocrine regulated secretory vesicles or the ruffled border of the osteoclast, thereby regulating its activity. Involved in membrane trafficking and Ca(2+)-dependent membrane fusion. May play a role in the assembly of the V-type ATPase complex. In aerobic conditions, involved in intracellular iron homeostasis, thus triggering the activity of Fe(2+) prolyl hydroxylase (PHD) enzymes, and leading to HIF1A hydroxylation and subsequent proteasomal degradation. In islets of Langerhans cells, may regulate the acidification of dense-core secretory granules. This Rattus norvegicus (Rat) protein is V-type proton ATPase subunit S1 (Atp6ap1).